A 230-amino-acid chain; its full sequence is MTGLHQLISLLHLASPALPIGGFSYSQGLEAAIECGSVHDAPTAERWIGDNLRHVQAQCEAPLWLLLHRHWQAGDAVRVRSWNDWFHATRETSELRLETEQMGWSLARLIAQMEWGTPALRETLAALSPVCLPTAFTAACVALEIGARDGLAAYCFNWAENQVAAAIKAVPLGQVAGQHMLRRLHGAVLDTVDEACRRAEATPPQLSTFSPMLGLLCARHETQYSRLFRS.

Belongs to the UreF family. As to quaternary structure, ureD, UreF and UreG form a complex that acts as a GTP-hydrolysis-dependent molecular chaperone, activating the urease apoprotein by helping to assemble the nickel containing metallocenter of UreC. The UreE protein probably delivers the nickel.

Its subcellular location is the cytoplasm. Required for maturation of urease via the functional incorporation of the urease nickel metallocenter. This Cupriavidus taiwanensis (strain DSM 17343 / BCRC 17206 / CCUG 44338 / CIP 107171 / LMG 19424 / R1) (Ralstonia taiwanensis (strain LMG 19424)) protein is Urease accessory protein UreF.